The chain runs to 184 residues: MKNVTDSFVSLVHWPSAGSFGFNTDILATNPINLSVVLGVLIFFGKGVLSDLLDNRKQRILNTIRNSEELREGAIEQLEKARARLQDVQIEAEGYRAYGYFGIDEQRHESINSTYKTLEQLENNKNESIHFEQQRAINQVRQQIFQQALQGALGTLNSCLNNELHLRTISANIVLFGSMKELTD.

Residues 27 to 49 form a helical membrane-spanning segment; sequence LATNPINLSVVLGVLIFFGKGVL.

It belongs to the ATPase B chain family. In terms of assembly, F-type ATPases have 2 components, F(1) - the catalytic core - and F(0) - the membrane proton channel. F(1) has five subunits: alpha(3), beta(3), gamma(1), delta(1), epsilon(1). F(0) has four main subunits: a(1), b(1), b'(1) and c(10-14). The alpha and beta chains form an alternating ring which encloses part of the gamma chain. F(1) is attached to F(0) by a central stalk formed by the gamma and epsilon chains, while a peripheral stalk is formed by the delta, b and b' chains.

The protein resides in the plastid. The protein localises to the chloroplast thylakoid membrane. Its function is as follows. F(1)F(0) ATP synthase produces ATP from ADP in the presence of a proton or sodium gradient. F-type ATPases consist of two structural domains, F(1) containing the extramembraneous catalytic core and F(0) containing the membrane proton channel, linked together by a central stalk and a peripheral stalk. During catalysis, ATP synthesis in the catalytic domain of F(1) is coupled via a rotary mechanism of the central stalk subunits to proton translocation. Functionally, component of the F(0) channel, it forms part of the peripheral stalk, linking F(1) to F(0). This is ATP synthase subunit b, chloroplastic from Oenothera argillicola (Appalachian evening primrose).